A 158-amino-acid polypeptide reads, in one-letter code: AP-1 complex subunit sigma-1A (158 aa).

Ser147 is modified (phosphoserine).

Belongs to the adaptor complexes small subunit family. As to quaternary structure, adaptor protein complex 1 (AP-1) is a heterotetramer composed of two large adaptins (gamma-type subunit AP1G1 and beta-type subunit AP1B1), a medium adaptin (mu-type subunit AP1M1 or AP1M2) and a small adaptin (sigma-type subunit AP1S1 or AP1S2 or AP1S3). In terms of tissue distribution, widely expressed.

The protein resides in the golgi apparatus. It is found in the cytoplasmic vesicle membrane. It localises to the membrane. The protein localises to the clathrin-coated pit. Functionally, subunit of clathrin-associated adaptor protein complex 1 that plays a role in protein sorting in the late-Golgi/trans-Golgi network (TGN) and/or endosomes. The AP complexes mediate both the recruitment of clathrin to membranes and the recognition of sorting signals within the cytosolic tails of transmembrane cargo molecules. This is AP-1 complex subunit sigma-1A (AP1S1) from Homo sapiens (Human).